Consider the following 328-residue polypeptide: Ferredoxin--NADP reductase (328 aa).

Glu34, Gln42, Tyr47, Val87, Phe120, Asp283, and Thr323 together coordinate FAD.

This sequence belongs to the ferredoxin--NADP reductase type 2 family. In terms of assembly, homodimer. It depends on FAD as a cofactor.

It catalyses the reaction 2 reduced [2Fe-2S]-[ferredoxin] + NADP(+) + H(+) = 2 oxidized [2Fe-2S]-[ferredoxin] + NADPH. The polypeptide is Ferredoxin--NADP reductase (Pediococcus pentosaceus (strain ATCC 25745 / CCUG 21536 / LMG 10740 / 183-1w)).